Reading from the N-terminus, the 334-residue chain is MAFNLRNRNFLKLLDFTPREIQYMIDLAIDLKKAKYGGYERKHLTGKNIALIFEKTSTRTRCAFEVAAFDQGAQVSYLGPSGSQIGHKESMKDTARVLGRMYDGIEYRGYGQEIVEELGAYAGVPVWNGLTNEFHPTQILADFMTMLEHGKGKRLDQIKFAYLGDARNNMGNSLMVGAAKMGMDIRLVAPKAFWPEEDLVAKCRLIAEETGACITLTEDVKEGVLGTDFLYTDVWVSMGEAKEAWDQRVKLMTPYQINMDVINATKNPDVKFMHCLPAFHNDETTMGKEVADKYGMKGLEVTEDVFESEHSIVFDEAENRMHTIKAVMVATLGD.

Residues Ser57–Thr60, Gln84, Arg108, and His135–Gln138 each bind carbamoyl phosphate. Residues Asn169, Asp233, and Ser237 to Met238 contribute to the L-ornithine site. Residues Cys275–Leu276 and Arg320 each bind carbamoyl phosphate.

This sequence belongs to the aspartate/ornithine carbamoyltransferase superfamily. OTCase family.

The protein localises to the cytoplasm. It carries out the reaction carbamoyl phosphate + L-ornithine = L-citrulline + phosphate + H(+). It functions in the pathway amino-acid biosynthesis; L-arginine biosynthesis; L-arginine from L-ornithine and carbamoyl phosphate: step 1/3. Reversibly catalyzes the transfer of the carbamoyl group from carbamoyl phosphate (CP) to the N(epsilon) atom of ornithine (ORN) to produce L-citrulline. The chain is Ornithine carbamoyltransferase from Aeromonas salmonicida (strain A449).